The primary structure comprises 186 residues: ATP synthase subunit delta (186 aa).

The protein belongs to the ATPase delta chain family. As to quaternary structure, F-type ATPases have 2 components, F(1) - the catalytic core - and F(0) - the membrane proton channel. F(1) has five subunits: alpha(3), beta(3), gamma(1), delta(1), epsilon(1). F(0) has three main subunits: a(1), b(2) and c(10-14). The alpha and beta chains form an alternating ring which encloses part of the gamma chain. F(1) is attached to F(0) by a central stalk formed by the gamma and epsilon chains, while a peripheral stalk is formed by the delta and b chains.

The protein localises to the cell membrane. Functionally, f(1)F(0) ATP synthase produces ATP from ADP in the presence of a proton or sodium gradient. F-type ATPases consist of two structural domains, F(1) containing the extramembraneous catalytic core and F(0) containing the membrane proton channel, linked together by a central stalk and a peripheral stalk. During catalysis, ATP synthesis in the catalytic domain of F(1) is coupled via a rotary mechanism of the central stalk subunits to proton translocation. Its function is as follows. This protein is part of the stalk that links CF(0) to CF(1). It either transmits conformational changes from CF(0) to CF(1) or is implicated in proton conduction. This Wolbachia pipientis wMel protein is ATP synthase subunit delta.